The primary structure comprises 360 residues: Peptide chain release factor 1 (360 aa).

At glutamine 235 the chain carries N5-methylglutamine. Polar residues predominate over residues 285-295; it reads AQQASEASTRK. Positions 285 to 305 are disordered; that stretch reads AQQASEASTRKSLIGSGDRSD.

This sequence belongs to the prokaryotic/mitochondrial release factor family. Post-translationally, methylated by PrmC. Methylation increases the termination efficiency of RF1.

The protein localises to the cytoplasm. Functionally, peptide chain release factor 1 directs the termination of translation in response to the peptide chain termination codons UAG and UAA. This Thiobacillus denitrificans (strain ATCC 25259 / T1) protein is Peptide chain release factor 1.